A 425-amino-acid chain; its full sequence is Trigger factor (425 aa).

The PPIase FKBP-type domain maps to 163–248; the sequence is GDTAVIDFEG…VHEIKTKELP (86 aa).

The protein belongs to the FKBP-type PPIase family. Tig subfamily.

Its subcellular location is the cytoplasm. It catalyses the reaction [protein]-peptidylproline (omega=180) = [protein]-peptidylproline (omega=0). Functionally, involved in protein export. Acts as a chaperone by maintaining the newly synthesized protein in an open conformation. Functions as a peptidyl-prolyl cis-trans isomerase. The polypeptide is Trigger factor (Bacillus anthracis (strain A0248)).